Reading from the N-terminus, the 473-residue chain is Serine/threonine-protein phosphatase 2A activator 1 (473 aa).

Positions 360–473 (NAVPPPTSAH…HVPTKAPWAK (114 aa)) are disordered. Polar residues predominate over residues 368-378 (AHMSTTQSQSR). A compositionally biased stretch (low complexity) spans 395 to 416 (APWATATQAAPPAGAGTAAPWA).

It belongs to the PTPA-type PPIase family.

It localises to the cytoplasm. It is found in the nucleus. It carries out the reaction [protein]-peptidylproline (omega=180) = [protein]-peptidylproline (omega=0). Functionally, PPIases accelerate the folding of proteins. It catalyzes the cis-trans isomerization of proline imidic peptide bonds in oligopeptides. Acts as a regulatory subunit for PP2A-like phosphatases modulating their activity or substrate specificity, probably by inducing a conformational change in the catalytic subunit, a direct target of the PPIase. Can reactivate inactive phosphatase PP2A-phosphatase methylesterase complexes (PP2Ai) in presence of ATP and Mg(2+) by dissociating the inactive form from the complex. The sequence is that of Serine/threonine-protein phosphatase 2A activator 1 (rrd1) from Aspergillus fumigatus (strain ATCC MYA-4609 / CBS 101355 / FGSC A1100 / Af293) (Neosartorya fumigata).